The following is a 327-amino-acid chain: DNA-directed RNA polymerase subunit alpha (327 aa).

Residues 1–231 are alpha N-terminal domain (alpha-NTD); sequence MIYQMQMPAK…DHVTFFANFS (231 aa). Positions 252-327 are alpha C-terminal domain (alpha-CTD); that stretch reads MRRLFHTKIE…GMDITKYQMK (76 aa).

It belongs to the RNA polymerase alpha chain family. Homodimer. The RNAP catalytic core consists of 2 alpha, 1 beta, 1 beta' and 1 omega subunit. When a sigma factor is associated with the core the holoenzyme is formed, which can initiate transcription.

It catalyses the reaction RNA(n) + a ribonucleoside 5'-triphosphate = RNA(n+1) + diphosphate. DNA-dependent RNA polymerase catalyzes the transcription of DNA into RNA using the four ribonucleoside triphosphates as substrates. The polypeptide is DNA-directed RNA polymerase subunit alpha (Pelodictyon phaeoclathratiforme (strain DSM 5477 / BU-1)).